Consider the following 505-residue polypeptide: Maturase K (505 aa).

It belongs to the intron maturase 2 family. MatK subfamily.

The protein resides in the plastid. It is found in the chloroplast. In terms of biological role, usually encoded in the trnK tRNA gene intron. Probably assists in splicing its own and other chloroplast group II introns. The polypeptide is Maturase K (Glycine max (Soybean)).